The chain runs to 295 residues: Ribosomal RNA small subunit methyltransferase A (295 aa).

S-adenosyl-L-methionine-binding residues include asparagine 33, valine 35, glycine 60, glutamate 81, aspartate 111, and asparagine 129.

This sequence belongs to the class I-like SAM-binding methyltransferase superfamily. rRNA adenine N(6)-methyltransferase family. RsmA subfamily.

It localises to the cytoplasm. The catalysed reaction is adenosine(1518)/adenosine(1519) in 16S rRNA + 4 S-adenosyl-L-methionine = N(6)-dimethyladenosine(1518)/N(6)-dimethyladenosine(1519) in 16S rRNA + 4 S-adenosyl-L-homocysteine + 4 H(+). Its function is as follows. Specifically dimethylates two adjacent adenosines (A1518 and A1519) in the loop of a conserved hairpin near the 3'-end of 16S rRNA in the 30S particle. May play a critical role in biogenesis of 30S subunits. The polypeptide is Ribosomal RNA small subunit methyltransferase A (Corynebacterium diphtheriae (strain ATCC 700971 / NCTC 13129 / Biotype gravis)).